The sequence spans 488 residues: Protein nucleotidyltransferase YdiU (488 aa).

The ATP site is built by G91, G93, R94, K114, D126, G127, R177, and R184. D253 functions as the Proton acceptor in the catalytic mechanism. Positions 254 and 263 each coordinate Mg(2+). Position 263 (D263) interacts with ATP.

It belongs to the SELO family. Mg(2+) is required as a cofactor. It depends on Mn(2+) as a cofactor.

It catalyses the reaction L-seryl-[protein] + ATP = 3-O-(5'-adenylyl)-L-seryl-[protein] + diphosphate. The catalysed reaction is L-threonyl-[protein] + ATP = 3-O-(5'-adenylyl)-L-threonyl-[protein] + diphosphate. The enzyme catalyses L-tyrosyl-[protein] + ATP = O-(5'-adenylyl)-L-tyrosyl-[protein] + diphosphate. It carries out the reaction L-histidyl-[protein] + UTP = N(tele)-(5'-uridylyl)-L-histidyl-[protein] + diphosphate. It catalyses the reaction L-seryl-[protein] + UTP = O-(5'-uridylyl)-L-seryl-[protein] + diphosphate. The catalysed reaction is L-tyrosyl-[protein] + UTP = O-(5'-uridylyl)-L-tyrosyl-[protein] + diphosphate. Nucleotidyltransferase involved in the post-translational modification of proteins. It can catalyze the addition of adenosine monophosphate (AMP) or uridine monophosphate (UMP) to a protein, resulting in modifications known as AMPylation and UMPylation. This chain is Protein nucleotidyltransferase YdiU, found in Bacillus cereus (strain ZK / E33L).